The sequence spans 377 residues: Succinyl-diaminopimelate desuccinylase (377 aa).

A Zn(2+)-binding site is contributed by histidine 66. Aspartate 68 is a catalytic residue. Aspartate 99 contacts Zn(2+). Glutamate 133 (proton acceptor) is an active-site residue. Positions 134, 162, and 348 each coordinate Zn(2+).

This sequence belongs to the peptidase M20A family. DapE subfamily. In terms of assembly, homodimer. It depends on Zn(2+) as a cofactor. Requires Co(2+) as cofactor.

The enzyme catalyses N-succinyl-(2S,6S)-2,6-diaminopimelate + H2O = (2S,6S)-2,6-diaminopimelate + succinate. It functions in the pathway amino-acid biosynthesis; L-lysine biosynthesis via DAP pathway; LL-2,6-diaminopimelate from (S)-tetrahydrodipicolinate (succinylase route): step 3/3. In terms of biological role, catalyzes the hydrolysis of N-succinyl-L,L-diaminopimelic acid (SDAP), forming succinate and LL-2,6-diaminopimelate (DAP), an intermediate involved in the bacterial biosynthesis of lysine and meso-diaminopimelic acid, an essential component of bacterial cell walls. The polypeptide is Succinyl-diaminopimelate desuccinylase (Xylella fastidiosa (strain M23)).